A 91-amino-acid polypeptide reads, in one-letter code: Small ribosomal subunit protein bS20 (91 aa).

This sequence belongs to the bacterial ribosomal protein bS20 family.

In terms of biological role, binds directly to 16S ribosomal RNA. In Wolinella succinogenes (strain ATCC 29543 / DSM 1740 / CCUG 13145 / JCM 31913 / LMG 7466 / NCTC 11488 / FDC 602W) (Vibrio succinogenes), this protein is Small ribosomal subunit protein bS20.